The sequence spans 884 residues: Pyruvate, phosphate dikinase (884 aa).

The segment at 1–351 (MSTRRVYFFG…LWMLQARAGK (351 aa)) is N-terminal. ATP is bound at residue Arg99. The segment at 352-408 (RTGFAMVRIAIDMCKEGMLTEEEALLRIDANKINEFLFKRFDPSVKPVVLGKGIPAS) is linker 1. The segment at 409 to 507 (PGAAVGVICF…KFKEGDFISI (99 aa)) is central. Thr462 is modified (phosphothreonine; by PDRP1). His464 (tele-phosphohistidine intermediate) is an active-site residue. The linker 2 stretch occupies residues 508–542 (NGTTGEIYNGAVQTIEPGITDDLQTIMDWSDKYRV). The C-terminal stretch occupies residues 543-884 (LKIRTNADTP…IAAIKARTNQ (342 aa)). 7 residues coordinate substrate: Arg570, Arg626, Glu753, Gly774, Thr775, Asn776, and Asp777. Glu753 is a Mg(2+) binding site. Asp777 provides a ligand contact to Mg(2+). Cys839 acts as the Proton donor in catalysis.

It belongs to the PEP-utilizing enzyme family. As to quaternary structure, homodimer. Requires Mg(2+) as cofactor. Phosphorylation of Thr-462 in the dark inactivates the enzyme. Dephosphorylation upon light stimulation reactivates the enzyme.

It carries out the reaction pyruvate + phosphate + ATP = phosphoenolpyruvate + AMP + diphosphate + H(+). Activated by light-induced dephosphorylation. Inhibited by dark-induced phosphorylation. Both reactions are catalyzed by PDRP1. Functionally, catalyzes the reversible phosphorylation of pyruvate and phosphate. This is Pyruvate, phosphate dikinase from Giardia intestinalis (Giardia lamblia).